The chain runs to 74 residues: MESNFLLFIVQQNLFDHYIISIVSNRIIGIRASTRKVEYQFFLAFKSFPSIMGRTSPKFHIINKHFLSLFKREK.

This is an uncharacterized protein from Schizosaccharomyces pombe (strain 972 / ATCC 24843) (Fission yeast).